A 709-amino-acid chain; its full sequence is Probable lanosterol 14-alpha demethylase (709 aa).

Position 425 (cysteine 425) interacts with heme.

The protein belongs to the cytochrome P450 family. Requires heme as cofactor.

It localises to the membrane. It carries out the reaction a 14alpha-methyl steroid + 3 reduced [NADPH--hemoprotein reductase] + 3 O2 = a Delta(14) steroid + formate + 3 oxidized [NADPH--hemoprotein reductase] + 4 H2O + 4 H(+). The protein operates within steroid biosynthesis; zymosterol biosynthesis; zymosterol from lanosterol: step 1/6. Catalyzes the 14-alpha demethylation of obtusifoliol to 4 alpha-methyl-5 alpha-ergosta-8,14,24(28)-trien-3 beta-ol. This chain is Probable lanosterol 14-alpha demethylase, found in Acanthamoeba polyphaga (Amoeba).